Reading from the N-terminus, the 614-residue chain is Probable pectinesterase/pectinesterase inhibitor 13 (614 aa).

The helical transmembrane segment at 25–45 threads the bilayer; it reads IIVGTVSLLVVVAAIVGGAFA. A disordered region spans residues 55 to 102; sequence QQQQQQQAKNHNKSGSGNNVVKDSDKKSPSPPTPSQKAPVSAAQSVKP. N-linked (GlcNAc...) asparagine glycans are attached at residues Asn66, Asn128, Asn197, Asn243, Asn301, Asn351, and Asn367. The segment at 103–255 is pectinesterase inhibitor 13; the sequence is GQGDKIIQTL…QVLTSNSLAL (153 aa). Positions 301 to 598 are pectinesterase 13; that stretch reads NATVAKDGSG…YTVGPFLQGD (298 aa). Substrate-binding residues include Thr376 and Gln406. The Proton donor; for pectinesterase activity role is filled by Asp429. Cys443 and Cys463 are joined by a disulfide. The active-site Nucleophile; for pectinesterase activity is Asp450. 2 residues coordinate substrate: Arg518 and Trp520. Residues Asn522 and Asn588 are each glycosylated (N-linked (GlcNAc...) asparagine).

It in the N-terminal section; belongs to the PMEI family. This sequence in the C-terminal section; belongs to the pectinesterase family. As to expression, expressed in flower buds.

The protein resides in the membrane. It catalyses the reaction [(1-&gt;4)-alpha-D-galacturonosyl methyl ester](n) + n H2O = [(1-&gt;4)-alpha-D-galacturonosyl](n) + n methanol + n H(+). Its pathway is glycan metabolism; pectin degradation; 2-dehydro-3-deoxy-D-gluconate from pectin: step 1/5. In terms of biological role, acts in the modification of cell walls via demethylesterification of cell wall pectin. The polypeptide is Probable pectinesterase/pectinesterase inhibitor 13 (PME13) (Arabidopsis thaliana (Mouse-ear cress)).